The following is a 92-amino-acid chain: Small ribosomal subunit protein uS19 (92 aa).

It belongs to the universal ribosomal protein uS19 family.

Protein S19 forms a complex with S13 that binds strongly to the 16S ribosomal RNA. The chain is Small ribosomal subunit protein uS19 from Lactococcus lactis subsp. cremoris (strain MG1363).